A 224-amino-acid polypeptide reads, in one-letter code: 2,5-diamino-6-ribosylamino-4(3H)-pyrimidinone 5'-phosphate reductase (224 aa).

NADP(+)-binding positions include Gly-16, Thr-57, Asp-61, 83–86 (SKLR), Val-134, and 156–159 (GGTL).

The protein belongs to the HTP reductase family. As to quaternary structure, homodimer.

The catalysed reaction is 2,5-diamino-6-(1-D-ribitylamino)pyrimidin-4(3H)-one 5'-phosphate + NADP(+) = 2,5-diamino-6-(1-D-ribosylamino)pyrimidin-4(3H)-one 5'-phosphate + NADPH + H(+). The enzyme catalyses 2,5-diamino-6-(1-D-ribitylamino)pyrimidin-4(3H)-one 5'-phosphate + NAD(+) = 2,5-diamino-6-(1-D-ribosylamino)pyrimidin-4(3H)-one 5'-phosphate + NADH + H(+). It participates in cofactor biosynthesis; riboflavin biosynthesis. Catalyzes an early step in riboflavin biosynthesis, the NAD(P)H-dependent reduction of the ribose side chain of 2,5-diamino-6-ribosylamino-4(3H)-pyrimidinone 5'-phosphate, yielding 2,5-diamino-6-ribitylamino-4(3H)-pyrimidinone 5'-phosphate. The beta anomer is the authentic substrate, and the alpha anomer can serve as substrate subsequent to spontaneous anomerization. NADPH and NADH function equally well as the reductants. Does not catalyze the reduction of 5-amino-6-(5-phospho-D-ribosylamino)uracil to 5-amino-6-(5-phospho-D-ribitylamino)uracil. This Methanocaldococcus jannaschii (strain ATCC 43067 / DSM 2661 / JAL-1 / JCM 10045 / NBRC 100440) (Methanococcus jannaschii) protein is 2,5-diamino-6-ribosylamino-4(3H)-pyrimidinone 5'-phosphate reductase (arfC).